The primary structure comprises 352 residues: Phenylalanine--tRNA ligase alpha subunit (352 aa).

Glu258 contacts Mg(2+).

It belongs to the class-II aminoacyl-tRNA synthetase family. Phe-tRNA synthetase alpha subunit type 1 subfamily. As to quaternary structure, tetramer of two alpha and two beta subunits. Mg(2+) serves as cofactor.

Its subcellular location is the cytoplasm. The catalysed reaction is tRNA(Phe) + L-phenylalanine + ATP = L-phenylalanyl-tRNA(Phe) + AMP + diphosphate + H(+). The sequence is that of Phenylalanine--tRNA ligase alpha subunit from Staphylococcus aureus (strain NCTC 8325 / PS 47).